A 216-amino-acid chain; its full sequence is Ras-related protein Rab-2B (216 aa).

The GTP site is built by Gly-16, Val-17, Gly-18, Lys-19, Ser-20, Cys-21, and Thr-38. Ser-20 is a binding site for Mg(2+). Positions 37 to 42 (LTIGVE) match the Switch 1 motif. Mg(2+) contacts are provided by Thr-38 and Asp-61. The Switch 2 signature appears at 63-72 (AGQESFRSIT). GTP-binding residues include Gly-64, Asn-119, Lys-120, Asp-122, Ala-150, and Lys-151. Residues 189–207 (PQQSITSSVGPCSPQQNVS) show a composition bias toward polar residues. Residues 189–216 (PQQSITSSVGPCSPQQNVSDIGPDSGCC) form a disordered region. S-geranylgeranyl cysteine attachment occurs at residues Cys-215 and Cys-216.

It belongs to the small GTPase superfamily. Rab family. As to quaternary structure, interacts (in GTP-bound form) with GARIN4 (via N-terminus). Interacts (in GTP-bound form) with GARIN5A. Interacts (in GTP-bound form) with GARIN1B. Interacts with VPS39 and VPS41. It depends on Mg(2+) as a cofactor.

The protein localises to the cell membrane. It is found in the endoplasmic reticulum membrane. The protein resides in the golgi apparatus membrane. Its subcellular location is the cytoplasmic vesicle. It localises to the secretory vesicle. The protein localises to the acrosome. It is found in the autophagosome membrane. The catalysed reaction is GTP + H2O = GDP + phosphate + H(+). With respect to regulation, regulated by guanine nucleotide exchange factors (GEFs) which promote the exchange of bound GDP for free GTP, GTPase activating proteins (GAPs) which increase the GTP hydrolysis activity, and GDP dissociation inhibitors (GDIs) which inhibit the dissociation of the nucleotide from the GTPase. The small GTPases Rab are key regulators of intracellular membrane trafficking, from the formation of transport vesicles to their fusion with membranes. Rabs cycle between active GTP-bound and inactive GDP-bound states. In their active state, drive transport of vesicular carriers from donor organelles to acceptor organelles to regulate the membrane traffic that maintains organelle identity and morphology. Regulates the compacted morphology of the Golgi. Promotes cytosolic DNA-induced innate immune responses. Regulates IFN responses against DNA viruses by regulating the CGAS-STING signaling axis. Together with RAB2A redundantly required for efficient autophagic flux. The chain is Ras-related protein Rab-2B (Rab2b) from Mus musculus (Mouse).